A 148-amino-acid chain; its full sequence is Endothelial differentiation-related factor 1 (148 aa).

N-acetylalanine is present on Ala2. A Phosphoserine modification is found at Ser4. Residue Lys25 is modified to N6-methyllysine. Positions 33–42 (RRGEDVETSK) are enriched in basic and acidic residues. Positions 33–66 (RRGEDVETSKKWAAGQNKQHSITKNTAKLDRETE) are disordered. The segment at 37-113 (DVETSKKWAA…QVIADYESGR (77 aa)) is interaction with NR5A2, PPARG and NR1H3. A compositionally biased stretch (polar residues) spans 48-58 (QNKQHSITKNT). Residues 69–108 (HHDRVTLEVGKVIQQGRQSKGLTQKDLATKINEKPQVIAD) are interaction with TBP and NR5A1. An IQ motif motif is present at residues 81–88 (IQQGRQSK). The HTH cro/C1-type domain occupies 81-135 (IQQGRQSKGLTQKDLATKINEKPQVIADYESGRAIPNNQVLGKIERAIGLKLRGK). A DNA-binding region (H-T-H motif) is located at residues 92-111 (QKDLATKINEKPQVIADYES).

In terms of assembly, interacts with TBP and the transcription factor IID (TFIID) complex, NR5A2, NR1H3 and PPARG. Interaction with TBP is regulated by phosphorylation. Binds NR5A1, ATF1, FOS and JUN via their conserved basic region. Binding to calmodulin is regulated by calcium and phosphorylation of the IQ motif. Post-translationally, phosphorylated (by PKA and PKC). In terms of tissue distribution, expressed in brain, liver, lung, kidney and heart (at protein level). Ubiquitously expressed. More abundant in heart, pancreas, liver, intestine and adipose tissues.

Its subcellular location is the cytoplasm. It is found in the nucleus. Its function is as follows. Transcriptional coactivator stimulating NR5A1 and ligand-dependent NR1H3/LXRA and PPARG transcriptional activities. Enhances the DNA-binding activity of ATF1, ATF2, CREB1 and NR5A1. Regulates nitric oxid synthase activity probably by sequestering calmodulin in the cytoplasm. May function in endothelial cells differentiation, hormone-induced cardiomyocytes hypertrophy and lipid metabolism. This chain is Endothelial differentiation-related factor 1 (EDF1), found in Homo sapiens (Human).